An 88-amino-acid chain; its full sequence is RNA-binding protein Hfq (88 aa).

The 60-residue stretch at 9-68 (DPYLNVLRKERVPVSIYLVNGIKLQGQVESFDQFVVLLKNTVSQMVYKHAISTVVPSRAV) folds into the Sm domain.

Belongs to the Hfq family. Homohexamer.

Functionally, RNA chaperone that binds small regulatory RNA (sRNAs) and mRNAs to facilitate mRNA translational regulation in response to envelope stress, environmental stress and changes in metabolite concentrations. Also binds with high specificity to tRNAs. The sequence is that of RNA-binding protein Hfq from Cellvibrio japonicus (strain Ueda107) (Pseudomonas fluorescens subsp. cellulosa).